A 275-amino-acid polypeptide reads, in one-letter code: DNA polymerase II subunit B4 (275 aa).

The DNA-binding element occupies 11–17 (LPLAIVR). Positions 112-122 (ASYPAGGAALK) are enriched in low complexity. Residues 112–275 (ASYPAGGAAL…EEVESDEEDE (164 aa)) form a disordered region. Positions 135-142 (KKRKQEEP) match the Nuclear localization signal motif. Positions 151–161 (SKIDEETKRND) are enriched in basic and acidic residues. Residues 152–179 (KIDEETKRNDEETENDNTEEENGNDEED) are a coiled coil. Composition is skewed to acidic residues over residues 162-237 (EETE…EESG) and 266-275 (EEVESDEEDE).

It belongs to the NFYB/HAP3 subunit family. Heterotrimeric transcription factor composed of three components, NF-YA, NF-YB and NF-YC. NF-YB and NF-YC must interact and dimerize for NF-YA association and DNA binding. Binds directly with DPB3-1.

The protein localises to the nucleus. Component of the NF-Y/HAP transcription factor complex. The NF-Y complex stimulates the transcription of various genes by recognizing and binding to a CCAAT motif in promoters. The polypeptide is DNA polymerase II subunit B4 (Arabidopsis thaliana (Mouse-ear cress)).